The chain runs to 126 residues: Small ribosomal subunit protein bS6 (126 aa).

Residues 103–126 (LKAKDERKAPEALVEEVEAEDADE) form a disordered region. A compositionally biased stretch (acidic residues) spans 115–126 (LVEEVEAEDADE).

The protein belongs to the bacterial ribosomal protein bS6 family.

In terms of biological role, binds together with bS18 to 16S ribosomal RNA. The sequence is that of Small ribosomal subunit protein bS6 from Glaesserella parasuis serovar 5 (strain SH0165) (Haemophilus parasuis).